Here is a 336-residue protein sequence, read N- to C-terminus: Glyceraldehyde-3-phosphate dehydrogenase (336 aa).

Residues 12–13, Asp34, and Ser120 contribute to the NAD(+) site; that span reads RI. D-glyceraldehyde 3-phosphate contacts are provided by residues 150–152, Thr181, Arg198, 211–212, and Arg234; these read SCT and TG. Residue Cys151 is the Nucleophile of the active site. Asn316 lines the NAD(+) pocket.

It belongs to the glyceraldehyde-3-phosphate dehydrogenase family. In terms of assembly, homotetramer.

The protein localises to the cytoplasm. The catalysed reaction is D-glyceraldehyde 3-phosphate + phosphate + NAD(+) = (2R)-3-phospho-glyceroyl phosphate + NADH + H(+). It functions in the pathway carbohydrate degradation; glycolysis; pyruvate from D-glyceraldehyde 3-phosphate: step 1/5. Its function is as follows. Catalyzes the oxidative phosphorylation of glyceraldehyde 3-phosphate (G3P) to 1,3-bisphosphoglycerate (BPG) using the cofactor NAD. The first reaction step involves the formation of a hemiacetal intermediate between G3P and a cysteine residue, and this hemiacetal intermediate is then oxidized to a thioester, with concomitant reduction of NAD to NADH. The reduced NADH is then exchanged with the second NAD, and the thioester is attacked by a nucleophilic inorganic phosphate to produce BPG. In Staphylococcus aureus, this protein is Glyceraldehyde-3-phosphate dehydrogenase (gapA).